We begin with the raw amino-acid sequence, 293 residues long: Small ribosomal subunit biogenesis GTPase RsgA (293 aa).

The CP-type G domain occupies 63 to 223 (KNELVRPPIA…VADTPGFSSL (161 aa)). GTP-binding positions include 112–115 (SKMD) and 166–174 (GQSGVGKSS). Zn(2+) is bound by residues C247, C252, H254, and C260.

Belongs to the TRAFAC class YlqF/YawG GTPase family. RsgA subfamily. Monomer. Associates with 30S ribosomal subunit, binds 16S rRNA. The cofactor is Zn(2+).

It is found in the cytoplasm. Functionally, one of several proteins that assist in the late maturation steps of the functional core of the 30S ribosomal subunit. Helps release RbfA from mature subunits. May play a role in the assembly of ribosomal proteins into the subunit. Circularly permuted GTPase that catalyzes slow GTP hydrolysis, GTPase activity is stimulated by the 30S ribosomal subunit. This chain is Small ribosomal subunit biogenesis GTPase RsgA, found in Bacillus cereus (strain ATCC 10987 / NRS 248).